The chain runs to 109 residues: Probable gas vesicle protein J1 (109 aa).

Belongs to the gas vesicle GvpA family. Interacts with GvpA.

It is found in the gas vesicle. Functionally, a minor component of the gas vesicle, might be involved in nucleating gas vesicle formation. Gas vesicles (GV) are hollow, gas filled proteinaceous nanostructures. It is not clear what function GVs perform in soil bacteria. This is Probable gas vesicle protein J1 (gvpJ1) from Streptomyces coelicolor (strain ATCC BAA-471 / A3(2) / M145).